The chain runs to 195 residues: Peptide deformylase (195 aa).

Fe cation contacts are provided by cysteine 102 and histidine 144. Glutamate 145 is a catalytic residue. Fe cation is bound at residue histidine 148.

Belongs to the polypeptide deformylase family. The cofactor is Fe(2+).

The enzyme catalyses N-terminal N-formyl-L-methionyl-[peptide] + H2O = N-terminal L-methionyl-[peptide] + formate. Its function is as follows. Removes the formyl group from the N-terminal Met of newly synthesized proteins. Requires at least a dipeptide for an efficient rate of reaction. N-terminal L-methionine is a prerequisite for activity but the enzyme has broad specificity at other positions. In Salinibacter ruber (strain DSM 13855 / M31), this protein is Peptide deformylase.